A 659-amino-acid polypeptide reads, in one-letter code: RNA polymerase II subunit A C-terminal domain phosphatase (659 aa).

Residues 139–303 (ITNRKLVLLV…KNSKEQMPVQ (165 aa)) form the FCP1 homology domain. In terms of domain architecture, BRCT spans 351–443 (ERHKVLDGCV…LKADENLFQL (93 aa)). The span at 484–504 (ALSDDEDDGDNEDEDDDGNDV) shows a compositional bias: acidic residues. Residues 484-640 (ALSDDEDDGD…PESDDDDEFE (157 aa)) form a disordered region. Positions 505–519 (GEDKGDENLEEKQEK) are enriched in basic and acidic residues. Positions 529–538 (QNGSVENQSG) are enriched in polar residues. Acidic residues-rich tracts occupy residues 560–576 (MEDE…DDDT), 596–607 (ENEDDAVFDVDD), and 616–640 (IDEE…DEFE).

It localises to the nucleus. The catalysed reaction is O-phospho-L-seryl-[protein] + H2O = L-seryl-[protein] + phosphate. It catalyses the reaction O-phospho-L-threonyl-[protein] + H2O = L-threonyl-[protein] + phosphate. During the late stages of oogenesis, dephosphorylates 'Ser-5' of the heptad repeats YSPTSPS in the C-terminal domain of the largest RNA polymerase II subunit ama-1. Similarly, dephosphorylates 'Ser-5' of ama-1 in early embryonic cells prior to the activation of the zygotic transcription program at the 4-cell embryonic stage. May dephosphorylate 'Ser-2' of the ama-1 heptad repeats YSPTSPS in embryonic somatic and germline cells. This chain is RNA polymerase II subunit A C-terminal domain phosphatase, found in Caenorhabditis elegans.